Reading from the N-terminus, the 162-residue chain is Small ribosomal subunit protein bS16 (162 aa).

The tract at residues 113–162 is disordered; that stretch reads ADGGPTTEATKPKKKSPAKKAAKAAEPAPQPEQPDTPALGGEQAELTAES. Over residues 124–134 the composition is skewed to basic residues; the sequence is PKKKSPAKKAA.

The protein belongs to the bacterial ribosomal protein bS16 family.

The chain is Small ribosomal subunit protein bS16 from Mycobacterium tuberculosis (strain ATCC 25177 / H37Ra).